Consider the following 354-residue polypeptide: Kelch domain-containing protein 8B (354 aa).

Kelch repeat units lie at residues 1-31 (MAAG…HQDG), 32-79 (HLLV…VLGK), 81-127 (VLVV…ERDG), 128-175 (MVYA…LHGN), 176-222 (KIYV…MAEG), 224-281 (VFSL…SLGG), 282-329 (NIVA…QAGP), and 331-354 (LFVI…RDGV).

It localises to the cytoplasm. The protein localises to the midbody. In terms of biological role, involved in pinching off the separated nuclei at the cleavage furrow and in cytokinesis. Required for mitotic integrity and maintenance of chromosomal stability. Protects cells against mitotic errors, centrosomal amplification, micronucleus formation and aneuploidy. Plays a key role of midbody function involving abscission of the daughter cells during cytokinesis and appropriate chromosomal and nuclear segregation into the daughter cells. The chain is Kelch domain-containing protein 8B (Klhdc8b) from Mus musculus (Mouse).